The sequence spans 416 residues: Gamma-glutamyl phosphate reductase (416 aa).

Belongs to the gamma-glutamyl phosphate reductase family.

The protein resides in the cytoplasm. The enzyme catalyses L-glutamate 5-semialdehyde + phosphate + NADP(+) = L-glutamyl 5-phosphate + NADPH + H(+). Its pathway is amino-acid biosynthesis; L-proline biosynthesis; L-glutamate 5-semialdehyde from L-glutamate: step 2/2. Its function is as follows. Catalyzes the NADPH-dependent reduction of L-glutamate 5-phosphate into L-glutamate 5-semialdehyde and phosphate. The product spontaneously undergoes cyclization to form 1-pyrroline-5-carboxylate. This chain is Gamma-glutamyl phosphate reductase, found in Salmonella paratyphi C (strain RKS4594).